A 709-amino-acid chain; its full sequence is Phosphoribosylformylglycinamidine synthase subunit PurL (709 aa).

Histidine 36 is an active-site residue. 2 residues coordinate ATP: tyrosine 39 and lysine 80. Mg(2+) is bound at residue glutamate 82. Residues 83-86 (SHNH) and arginine 105 contribute to the substrate site. Histidine 84 serves as the catalytic Proton acceptor. Aspartate 106 contacts Mg(2+). Glutamine 226 provides a ligand contact to substrate. Residue aspartate 252 coordinates Mg(2+). Position 294–296 (294–296 (ETQ)) interacts with substrate. Residues aspartate 470 and glycine 507 each coordinate ATP. Serine 510 lines the substrate pocket.

This sequence belongs to the FGAMS family. As to quaternary structure, monomer. Part of the FGAM synthase complex composed of 1 PurL, 1 PurQ and 2 PurS subunits.

It localises to the cytoplasm. The enzyme catalyses N(2)-formyl-N(1)-(5-phospho-beta-D-ribosyl)glycinamide + L-glutamine + ATP + H2O = 2-formamido-N(1)-(5-O-phospho-beta-D-ribosyl)acetamidine + L-glutamate + ADP + phosphate + H(+). It participates in purine metabolism; IMP biosynthesis via de novo pathway; 5-amino-1-(5-phospho-D-ribosyl)imidazole from N(2)-formyl-N(1)-(5-phospho-D-ribosyl)glycinamide: step 1/2. Part of the phosphoribosylformylglycinamidine synthase complex involved in the purines biosynthetic pathway. Catalyzes the ATP-dependent conversion of formylglycinamide ribonucleotide (FGAR) and glutamine to yield formylglycinamidine ribonucleotide (FGAM) and glutamate. The FGAM synthase complex is composed of three subunits. PurQ produces an ammonia molecule by converting glutamine to glutamate. PurL transfers the ammonia molecule to FGAR to form FGAM in an ATP-dependent manner. PurS interacts with PurQ and PurL and is thought to assist in the transfer of the ammonia molecule from PurQ to PurL. This is Phosphoribosylformylglycinamidine synthase subunit PurL from Saccharolobus islandicus (strain M.16.4 / Kamchatka #3) (Sulfolobus islandicus).